A 193-amino-acid chain; its full sequence is Ion-translocating oxidoreductase complex subunit A (193 aa).

6 helical membrane passes run 5–25 (LLLFVGTVLVNNFVLVKFLGL), 39–59 (MGMGLATTFVMTLASICAWLI), 63–83 (ILIPLNLIYLRTLAFILVIAV), 102–122 (LLGIFLPLITTNCAVLGVALL), 134–154 (ALYGFSAAVGFSLVMVLFAAI), and 171–191 (AIALITAGLMSLAFMGFSGLV).

It belongs to the NqrDE/RnfAE family. The complex is composed of six subunits: RsxA, RsxB, RsxC, RsxD, RsxE and RsxG.

The protein resides in the cell inner membrane. Functionally, part of a membrane-bound complex that couples electron transfer with translocation of ions across the membrane. Required to maintain the reduced state of SoxR. The chain is Ion-translocating oxidoreductase complex subunit A from Shigella boydii serotype 18 (strain CDC 3083-94 / BS512).